The chain runs to 410 residues: Peptidase T (410 aa).

H79 serves as a coordination point for Zn(2+). Residue D81 is part of the active site. Residue D142 participates in Zn(2+) binding. The active-site Proton acceptor is E176. 3 residues coordinate Zn(2+): E177, D199, and H381.

Belongs to the peptidase M20B family. It depends on Zn(2+) as a cofactor.

The protein resides in the cytoplasm. It catalyses the reaction Release of the N-terminal residue from a tripeptide.. Cleaves the N-terminal amino acid of tripeptides. In Bacillus anthracis (strain A0248), this protein is Peptidase T.